We begin with the raw amino-acid sequence, 184 residues long: C-phycoerythrin class 1 subunit beta (184 aa).

Residues C50 and C61 each contribute to the (2R,3E)-phycoerythrobilin site. Position 72 is an N4-methylasparagine (N72). The (2R,3E)-phycoerythrobilin site is built by C82 and C165.

It belongs to the phycobiliprotein family. As to quaternary structure, heterodimer of an alpha and a beta chain. Contains three covalently linked phycoerythrobilin chromophores.

It localises to the cellular thylakoid membrane. In terms of biological role, light-harvesting photosynthetic bile pigment-protein from the phycobiliprotein complex. The chain is C-phycoerythrin class 1 subunit beta (cpeB) from Synechococcus sp. (strain WH8020).